A 292-amino-acid polypeptide reads, in one-letter code: MDFGHVLTAMVTPFDAKGNVDLEKVERLVEFLLANGTEGLVVAGTTGESPTLREEEKLALFEKVVTVVNKRVPVIAGTGSNNTYVSAQLTKKATALGVDGIMAVTPYYNKPSQEGMYAHFAAIAEATHLPVMLYNIPSRSVVNLSAETIVKLSYIPNITSLKEANGDLDHMVSVIEQTPDTFHLYSGDDSLTLPALSIGAKGVVSVASHIIGPEMQQMMMAFRGGDVEHAANLHRKLLPIMKGLFTAPNPTCVKAALQIKGFDTGGVRLPLVPPTSEQRQHLQFLIEQLKVS.

Thr-46 contacts pyruvate. Tyr-134 (proton donor/acceptor) is an active-site residue. Lys-162 acts as the Schiff-base intermediate with substrate in catalysis. Residue Val-204 coordinates pyruvate.

Belongs to the DapA family. As to quaternary structure, homotetramer; dimer of dimers.

The protein resides in the cytoplasm. It catalyses the reaction L-aspartate 4-semialdehyde + pyruvate = (2S,4S)-4-hydroxy-2,3,4,5-tetrahydrodipicolinate + H2O + H(+). It functions in the pathway amino-acid biosynthesis; L-lysine biosynthesis via DAP pathway; (S)-tetrahydrodipicolinate from L-aspartate: step 3/4. Catalyzes the condensation of (S)-aspartate-beta-semialdehyde [(S)-ASA] and pyruvate to 4-hydroxy-tetrahydrodipicolinate (HTPA). The protein is 4-hydroxy-tetrahydrodipicolinate synthase 2 of Halalkalibacterium halodurans (strain ATCC BAA-125 / DSM 18197 / FERM 7344 / JCM 9153 / C-125) (Bacillus halodurans).